The chain runs to 479 residues: Ribosomal RNA small subunit methyltransferase F (479 aa).

S-adenosyl-L-methionine is bound by residues 125–131 (AAAPGSK), E149, D176, and D194. C247 (nucleophile) is an active-site residue.

Belongs to the class I-like SAM-binding methyltransferase superfamily. RsmB/NOP family.

The protein resides in the cytoplasm. The enzyme catalyses cytidine(1407) in 16S rRNA + S-adenosyl-L-methionine = 5-methylcytidine(1407) in 16S rRNA + S-adenosyl-L-homocysteine + H(+). Functionally, specifically methylates the cytosine at position 1407 (m5C1407) of 16S rRNA. This Escherichia coli O81 (strain ED1a) protein is Ribosomal RNA small subunit methyltransferase F.